We begin with the raw amino-acid sequence, 493 residues long: MECQRCSASARNPATVESRKEKFCDECFIKFVSTKQRKQMMKDEYFRNLFKVIYPFEKEGSVSKILLPLSLSDSGSLVMLDIVHDLLLEQTKQHNNRTGFTVDVLTVFTEENVSVIKERMESLINEKMSQLNKISNIFNVHFIDVNEFFNNASEVSTFIIDNENFEIFSKSKSVDDSNILTLKEILGKYCLNSSSRSDLISIIKTQLIKHFAYENGYNAIMWGHSMTKLSEVIISLVVKGKGSQIATFLDSESFDTLNNKPCKYKNLYPMKDLLSVEIESFLQIRNLAQFLINVEETNVKPNCLIARKSLPSLGQQKLVKNMTINEITNKYFQDIQNDYSNIISTVLRTADKLTQPKSSMAKPSQCQICQSKIYTNPSNWLNRITVTSPYPVETTEEKYLFKQWQDSKLGQSHTHYVELLNEIKQGASNSLDVEDSDVKLCYGCLILLNTSIKDKNLVWPKVDTMDITANATNKNKELSQILDQFEINSDGEE.

Serine 489 carries the phosphoserine modification.

The protein belongs to the CTU2/NCS2 family. Interacts with NCS6 and URM1. May act by forming a heterodimer with NCS6.

The protein localises to the cytoplasm. It participates in tRNA modification; 5-methoxycarbonylmethyl-2-thiouridine-tRNA biosynthesis. In terms of biological role, plays a central role in 2-thiolation of mcm(5)S(2)U at tRNA wobble positions of tRNA(Lys), tRNA(Glu) and tRNA(Gln). May act by forming a heterodimer with NCS6 that ligates sulfur from thiocarboxylated URM1 onto the uridine of tRNAs at wobble position. Prior mcm(5) tRNA modification by the elongator complex is required for 2-thiolation. May also be involved in protein urmylation. The polypeptide is Cytoplasmic tRNA 2-thiolation protein 2 (Saccharomyces cerevisiae (strain YJM789) (Baker's yeast)).